The primary structure comprises 616 residues: Chaperone protein HscA (616 aa).

This sequence belongs to the heat shock protein 70 family.

Chaperone involved in the maturation of iron-sulfur cluster-containing proteins. Has a low intrinsic ATPase activity which is markedly stimulated by HscB. Involved in the maturation of IscU. This Salmonella paratyphi B (strain ATCC BAA-1250 / SPB7) protein is Chaperone protein HscA.